A 387-amino-acid polypeptide reads, in one-letter code: BarH-like 2 homeobox protein (387 aa).

Disordered stretches follow at residues 1–145 (MTME…FLIK), 157–240 (CAPY…TAFS), and 367–387 (PGGQ…PHPR). Over residues 7-24 (SGSSFGIDTILSSASSGS) the composition is skewed to polar residues. A compositionally biased stretch (low complexity) spans 100–113 (APTQSLQPLPQQQQ). Residues 114–126 (PLPPQQPPPPPPQ) are compositionally biased toward pro residues. Positions 127–141 (QLGSAASAPRTSTSS) are enriched in low complexity. Residues 160–178 (YSTSVSSPHHTPKQESNAV) are compositionally biased toward polar residues. Residues 180-220 (ESFRPKLEQEDSKTKLDKREDSQSDIKCHGTKEEGDREITS) are compositionally biased toward basic and acidic residues. A DNA-binding region (homeobox) is located at residues 232 to 291 (PRKARTAFSDHQLNQLERSFERQKYLSVQDRMDLAAALNLTDTQVKTWYQNRRTKWKRQT).

This sequence belongs to the BAR homeobox family.

Its subcellular location is the nucleus. Functionally, potential regulator of neural basic helix-loop-helix genes. This Homo sapiens (Human) protein is BarH-like 2 homeobox protein (BARHL2).